Here is a 490-residue protein sequence, read N- to C-terminus: Betaine aldehyde dehydrogenase (490 aa).

3 residues coordinate K(+): T26, I27, and D93. 150-152 (GAW) serves as a coordination point for NAD(+). K162 functions as the Charge relay system in the catalytic mechanism. Residue 176 to 179 (KPSE) participates in NAD(+) binding. V180 lines the K(+) pocket. Position 230–233 (230–233 (GVAS)) interacts with NAD(+). A K(+)-binding site is contributed by L246. The active-site Proton acceptor is the E252. 3 residues coordinate NAD(+): G254, C286, and E387. Residue C286 is the Nucleophile of the active site. C286 is subject to Cysteine sulfenic acid (-SOH). The K(+) site is built by K457 and G460. The active-site Charge relay system is E464.

This sequence belongs to the aldehyde dehydrogenase family. In terms of assembly, dimer of dimers. Requires K(+) as cofactor.

The enzyme catalyses betaine aldehyde + NAD(+) + H2O = glycine betaine + NADH + 2 H(+). It participates in amine and polyamine biosynthesis; betaine biosynthesis via choline pathway; betaine from betaine aldehyde: step 1/1. In terms of biological role, involved in the biosynthesis of the osmoprotectant glycine betaine. Catalyzes the irreversible oxidation of betaine aldehyde to the corresponding acid. The sequence is that of Betaine aldehyde dehydrogenase from Escherichia coli O7:K1 (strain IAI39 / ExPEC).